Here is a 59-residue protein sequence, read N- to C-terminus: Large ribosomal subunit protein uL30 (59 aa).

This sequence belongs to the universal ribosomal protein uL30 family. As to quaternary structure, part of the 50S ribosomal subunit.

This Buchnera aphidicola subsp. Acyrthosiphon kondoi (Acyrthosiphon kondoi symbiotic bacterium) protein is Large ribosomal subunit protein uL30.